The sequence spans 270 residues: MSEVELKPVHRIALGIEYDGSKYYGWQRQNEVRSVQEKLEKALSQVANQPIAVCCAGRTDAGVHGTGQVVHFETTSVRKDAAWTLGVNANLPGDIAVRWVKDVPDDFHARFSATARRYRYIIYNQRLRPAVLGQGVTHFYEPLDAERMQRAAQSLIGENDFTSFRAVQCQSRTPWRNVMHINVSRYGAYVVVDIKANAFVHHMVRNIVGSLMEVGAGHQPESWIAELLAAKDRTLAAATAKAEGLYLVSVDYPERFDLPKPPMGPLFLAD.

Residue D60 is the Nucleophile of the active site. Positions 107–111 (FHARF) are RNA binding. Y118 is a substrate binding site. The segment at 168 to 172 (QCQSR) is interaction with tRNA.

This sequence belongs to the tRNA pseudouridine synthase TruA family. As to quaternary structure, homodimer.

The catalysed reaction is uridine(38/39/40) in tRNA = pseudouridine(38/39/40) in tRNA. In terms of biological role, formation of pseudouridine at positions 38, 39 and 40 in the anticodon stem and loop of transfer RNAs. This is tRNA pseudouridine synthase A from Enterobacter sp. (strain 638).